The following is a 415-amino-acid chain: Mitogen-activated protein kinase mpkC (415 aa).

The 280-residue stretch at Y20–M299 folds into the Protein kinase domain. ATP-binding positions include V26–V34 and K49. D141 functions as the Proton acceptor in the catalytic mechanism. At T171 the chain carries Phosphothreonine. Positions T171 to Y173 match the TXY motif. A Phosphotyrosine modification is found at Y173.

Belongs to the protein kinase superfamily. Ser/Thr protein kinase family. MAP kinase subfamily. HOG1 sub-subfamily. The cofactor is Mg(2+). Dually phosphorylated on Thr-171 and Tyr-173, which activates the enzyme.

It carries out the reaction L-seryl-[protein] + ATP = O-phospho-L-seryl-[protein] + ADP + H(+). It catalyses the reaction L-threonyl-[protein] + ATP = O-phospho-L-threonyl-[protein] + ADP + H(+). Activated by tyrosine and threonine phosphorylation. Its function is as follows. Mitogen-activated protein kinase required for growth on media where sorbitol or mannitol is the sole carbon source. The sequence is that of Mitogen-activated protein kinase mpkC (mpkC) from Emericella nidulans (strain FGSC A4 / ATCC 38163 / CBS 112.46 / NRRL 194 / M139) (Aspergillus nidulans).